A 207-amino-acid chain; its full sequence is Ribonuclease HII (207 aa).

The RNase H type-2 domain occupies 17 to 207 (RIVAGVDEVG…SFKPLAAFVD (191 aa)). A divalent metal cation contacts are provided by Asp23, Glu24, and Asp120.

This sequence belongs to the RNase HII family. Mn(2+) is required as a cofactor. Requires Mg(2+) as cofactor.

It is found in the cytoplasm. The catalysed reaction is Endonucleolytic cleavage to 5'-phosphomonoester.. In terms of biological role, endonuclease that specifically degrades the RNA of RNA-DNA hybrids. The sequence is that of Ribonuclease HII from Herpetosiphon aurantiacus (strain ATCC 23779 / DSM 785 / 114-95).